Here is a 525-residue protein sequence, read N- to C-terminus: Putative ribose/galactose/methyl galactoside import ATP-binding protein (525 aa).

The tract at residues 1–20 is disordered; the sequence is MSGSATASPPAKPDLPSSDG. 2 consecutive ABC transporter domains span residues 33 to 269 and 279 to 523; these read LEIS…VGRE and KPAG…SGHR. Residue 65-72 participates in ATP binding; that stretch reads GENGAGKS.

Belongs to the ABC transporter superfamily. Carbohydrate importer 2 (CUT2) (TC 3.A.1.2) family.

The protein localises to the cell inner membrane. The catalysed reaction is D-ribose(out) + ATP + H2O = D-ribose(in) + ADP + phosphate + H(+). It catalyses the reaction D-galactose(out) + ATP + H2O = D-galactose(in) + ADP + phosphate + H(+). Functionally, part of an ABC transporter complex involved in carbohydrate import. Could be involved in ribose, galactose and/or methyl galactoside import. Responsible for energy coupling to the transport system. The chain is Putative ribose/galactose/methyl galactoside import ATP-binding protein from Pseudomonas syringae pv. tomato (strain ATCC BAA-871 / DC3000).